The following is a 472-amino-acid chain: Carboxypeptidase Q (472 aa).

The signal sequence occupies residues 1–20 (MKFLLFMFVGVVHLLPLASG). A propeptide spanning residues 21–44 (KAIYGNGPSQRTFQEIKEEIAHYG) is cleaved from the precursor. Residues asparagine 52, asparagine 61, and asparagine 179 are each glycosylated (N-linked (GlcNAc...) asparagine). 2 residues coordinate Zn(2+): histidine 290 and aspartate 302. The active-site Nucleophile is glutamate 336. Glutamate 337 contributes to the Zn(2+) binding site. 2 N-linked (GlcNAc...) asparagine glycosylation sites follow: asparagine 353 and asparagine 356. Aspartate 364 contributes to the Zn(2+) binding site. An N-linked (GlcNAc...) asparagine glycan is attached at asparagine 396. Histidine 434 is a binding site for Zn(2+).

This sequence belongs to the peptidase M28 family. Homodimer. The monomeric form is inactive while the homodimer is active. N-glycosylated. The secreted form is modified by hybrid or complex type oligosaccharide chains.

Its subcellular location is the endoplasmic reticulum. It is found in the golgi apparatus. The protein resides in the lysosome. The protein localises to the secreted. In terms of biological role, carboxypeptidase that may play an important role in the hydrolysis of circulating peptides. Catalyzes the hydrolysis of dipeptides with unsubstituted terminals into amino acids. May play a role in the liberation of thyroxine hormone from its thyroglobulin (Tg) precursor. This chain is Carboxypeptidase Q (CPQ), found in Bos taurus (Bovine).